A 613-amino-acid polypeptide reads, in one-letter code: RNA polymerase-associated protein RTF1 homolog (613 aa).

Disordered stretches follow at residues 1–90 (MSSS…DKAR) and 121–247 (QQLA…KDKI). Over residues 55-68 (PAKKKTLTKRKRRA) the composition is skewed to basic residues. Acidic residues predominate over residues 72–81 (SDDDQVDDDL). Basic and acidic residues predominate over residues 167 to 176 (AAFHRPSDIN). Residues 175-209 (INRKHKEKNAMDALKNKRKEIEKKNAKNEALSIDA) adopt a coiled-coil conformation. Residues 215-235 (SGSSSSSSSSESSRSSSSSRE) are compositionally biased toward low complexity. Residues 236 to 247 (SSPERVSEKDKI) show a composition bias toward basic and acidic residues. Residues 252 to 383 (VDGLSELRRA…KKQDIEKAIN (132 aa)) form the Plus3 domain. Positions 425–462 (RGDIREAEQIQTKIDEIERQADELEKERSKSISAIAFI) form a coiled coil. 2 disordered regions span residues 485–549 (SQDD…KTDI) and 564–613 (LKDF…SSAV). A compositionally biased stretch (low complexity) spans 510-521 (TLSASSSTTNLS). Residues 569–586 (TPESSGNKRPSISSSKGV) are compositionally biased toward polar residues. Over residues 602-613 (GSSTSAAPSSAV) the composition is skewed to low complexity.

In terms of assembly, component of the PAF1 complex which consists of at least cdc-73, ctr-9, leo-1, pafo-1 and rtfo-1.

The protein localises to the nucleus. Component of the PAF1 complex which is a multifunctional complex involved in transcription initiation via genetic interactions with TATA-binding proteins, elongation and transcription-coupled histone modification. In Caenorhabditis elegans, this protein is RNA polymerase-associated protein RTF1 homolog.